The primary structure comprises 451 residues: Tubulin alpha chain (451 aa).

Gln11 lines the GTP pocket. Lys40 carries the post-translational modification N6-acetyllysine. GTP is bound by residues Glu71, Gly144, Thr145, Thr179, Asn206, and Asn228. Mg(2+) is bound at residue Glu71. The active site involves Glu254. The tract at residues 432–451 (YEEVGAESAEGDDEDEGEDY) is disordered.

It belongs to the tubulin family. As to quaternary structure, dimer of alpha and beta chains. A typical microtubule is a hollow water-filled tube with an outer diameter of 25 nm and an inner diameter of 15 nM. Alpha-beta heterodimers associate head-to-tail to form protofilaments running lengthwise along the microtubule wall with the beta-tubulin subunit facing the microtubule plus end conferring a structural polarity. Microtubules usually have 13 protofilaments but different protofilament numbers can be found in some organisms and specialized cells. The cofactor is Mg(2+). Undergoes a tyrosination/detyrosination cycle, the cyclic removal and re-addition of a C-terminal tyrosine residue by the enzymes tubulin tyrosine carboxypeptidase (TTCP) and tubulin tyrosine ligase (TTL), respectively. In terms of processing, acetylation of alpha chains at Lys-40 stabilizes microtubules and affects affinity and processivity of microtubule motors. This modification has a role in multiple cellular functions, ranging from cell motility, cell cycle progression or cell differentiation to intracellular trafficking and signaling.

It localises to the cytoplasm. The protein localises to the cytoskeleton. The enzyme catalyses GTP + H2O = GDP + phosphate + H(+). Tubulin is the major constituent of microtubules, a cylinder consisting of laterally associated linear protofilaments composed of alpha- and beta-tubulin heterodimers. Microtubules grow by the addition of GTP-tubulin dimers to the microtubule end, where a stabilizing cap forms. Below the cap, tubulin dimers are in GDP-bound state, owing to GTPase activity of alpha-tubulin. The polypeptide is Tubulin alpha chain (TBA) (Daucus carota (Wild carrot)).